A 122-amino-acid chain; its full sequence is Beta-2-microglobulin (122 aa).

A signal peptide spans 1-23; sequence MFLRSTFVAALVACLAYIHLGDA. Residues 28-117 form the Ig-like C1-type domain; the sequence is PKVQIYSRNV…STLREATRFT (90 aa). An intrachain disulfide couples C48 to C103.

This sequence belongs to the beta-2-microglobulin family. Heterodimer of an alpha chain and a beta chain. Beta-2-microglobulin is the beta-chain of major histocompatibility complex class I molecules.

Its subcellular location is the secreted. In terms of biological role, component of the class I major histocompatibility complex (MHC). Involved in the presentation of peptide antigens to the immune system. In Acipenser baerii (Siberian sturgeon), this protein is Beta-2-microglobulin (b2m).